A 141-amino-acid chain; its full sequence is Protein KRTCAP2 homolog (141 aa).

4 consecutive transmembrane segments (helical) span residues 11–31 (VVSS…LRFC), 42–62 (VLLG…CVSN), 74–94 (AKLL…AGLV), and 97–117 (VCAT…NRIS).

The protein belongs to the KRTCAP2 family. Component of the oligosaccharyltransferase (OST) complex.

It localises to the membrane. In terms of biological role, subunit of the oligosaccharyl transferase (OST) complex that catalyzes the initial transfer of a defined glycan (Glc(3)Man(9)GlcNAc(2) in eukaryotes) from the lipid carrier dolichol-pyrophosphate to an asparagine residue within an Asn-X-Ser/Thr consensus motif in nascent polypeptide chains, the first step in protein N-glycosylation. N-glycosylation occurs cotranslationally and the complex associates with the Sec61 complex at the channel-forming translocon complex that mediates protein translocation across the endoplasmic reticulum (ER). All subunits are required for a maximal enzyme activity. In Drosophila melanogaster (Fruit fly), this protein is Protein KRTCAP2 homolog.